The chain runs to 500 residues: L-arabinose isomerase (500 aa).

The Mn(2+) site is built by Glu-306, Glu-333, His-349, and His-448.

Belongs to the arabinose isomerase family. It depends on Mn(2+) as a cofactor.

The enzyme catalyses beta-L-arabinopyranose = L-ribulose. It participates in carbohydrate degradation; L-arabinose degradation via L-ribulose; D-xylulose 5-phosphate from L-arabinose (bacterial route): step 1/3. Catalyzes the conversion of L-arabinose to L-ribulose. The chain is L-arabinose isomerase from Koribacter versatilis (strain Ellin345).